Here is a 185-residue protein sequence, read N- to C-terminus: NOP protein chaperone 1 (185 aa).

Positions 1–40 are disordered; the sequence is MEVHGKPKASPSCSSPTRDSSGVPVSKELLTAGSDGRGGI. Residues 10-21 show a composition bias toward low complexity; it reads SPSCSSPTRDSS. Residues serine 34 and serine 66 each carry the phosphoserine modification. The segment at 118–185 is disordered; it reads FEMNQSDSKE…LDSPASKKKK (68 aa). Over residues 143-152 the composition is skewed to acidic residues; that stretch reads SESEDEDDSI. At serine 178 the chain carries Phosphoserine.

Interacts with NOP58, RUVBL1 and RUVBL2; the interactions are direct and NOPCHAP1 bridges the association of NOP58 with RUVBL1:RUVBL2 even in absence of snoRNAs. The interactions with RUVBL1 and RUVBL2 are disrupted upon ATP binding.

Its subcellular location is the nucleus. Its function is as follows. Client-loading PAQosome/R2TP complex cofactor that selects NOP58 to promote box C/D small nucleolar ribonucleoprotein (snoRNP) assembly. Acts as a bridge between NOP58 and the R2TP complex via RUVBL1:RUVBL2. This chain is NOP protein chaperone 1, found in Homo sapiens (Human).